A 518-amino-acid polypeptide reads, in one-letter code: Protein nucleotidyltransferase YdiU (518 aa).

8 residues coordinate ATP: Gly-99, Gly-101, Arg-102, Lys-122, Asp-134, Gly-135, Arg-192, and Arg-199. The active-site Proton acceptor is Asp-270. Residues Asn-271 and Asp-280 each contribute to the Mg(2+) site. Asp-280 contacts ATP.

Belongs to the SELO family. The cofactor is Mg(2+). It depends on Mn(2+) as a cofactor.

The enzyme catalyses L-seryl-[protein] + ATP = 3-O-(5'-adenylyl)-L-seryl-[protein] + diphosphate. It catalyses the reaction L-threonyl-[protein] + ATP = 3-O-(5'-adenylyl)-L-threonyl-[protein] + diphosphate. The catalysed reaction is L-tyrosyl-[protein] + ATP = O-(5'-adenylyl)-L-tyrosyl-[protein] + diphosphate. It carries out the reaction L-histidyl-[protein] + UTP = N(tele)-(5'-uridylyl)-L-histidyl-[protein] + diphosphate. The enzyme catalyses L-seryl-[protein] + UTP = O-(5'-uridylyl)-L-seryl-[protein] + diphosphate. It catalyses the reaction L-tyrosyl-[protein] + UTP = O-(5'-uridylyl)-L-tyrosyl-[protein] + diphosphate. Functionally, nucleotidyltransferase involved in the post-translational modification of proteins. It can catalyze the addition of adenosine monophosphate (AMP) or uridine monophosphate (UMP) to a protein, resulting in modifications known as AMPylation and UMPylation. The sequence is that of Protein nucleotidyltransferase YdiU from Methylobacillus flagellatus (strain ATCC 51484 / DSM 6875 / VKM B-1610 / KT).